We begin with the raw amino-acid sequence, 60 residues long: Homeobox protein EgHBX4 (60 aa).

Residues 1-60 constitute a DNA-binding region (homeobox); sequence SRRERTIYTPEQLEAMEEVFGVNRYPDVSMREELASRLGINESKIQVWFKNRRAKLRNLE.

Belongs to the paired homeobox family. Bicoid subfamily.

The protein resides in the nucleus. The protein is Homeobox protein EgHBX4 (HBX4) of Echinococcus granulosus (Hydatid tapeworm).